The following is a 200-amino-acid chain: 3-isopropylmalate dehydratase small subunit (200 aa).

This sequence belongs to the LeuD family. LeuD type 1 subfamily. Heterodimer of LeuC and LeuD.

The catalysed reaction is (2R,3S)-3-isopropylmalate = (2S)-2-isopropylmalate. It functions in the pathway amino-acid biosynthesis; L-leucine biosynthesis; L-leucine from 3-methyl-2-oxobutanoate: step 2/4. Functionally, catalyzes the isomerization between 2-isopropylmalate and 3-isopropylmalate, via the formation of 2-isopropylmaleate. The sequence is that of 3-isopropylmalate dehydratase small subunit from Photobacterium profundum (strain SS9).